Here is a 140-residue protein sequence, read N- to C-terminus: Pro-variola growth factor (140 aa).

Residues 1–18 form the signal peptide; sequence MSMKYLMLLFAAMIIRSF. Residues 19–100 lie on the Extracellular side of the membrane; the sequence is ANSGNAIETT…SEKPNTTTSY (82 aa). A glycan (N-linked (GlcNAc...) asparagine; by host) is linked at asparagine 34. One can recognise an EGF-like domain in the interval 41-81; it reads AIRLCGPEGNGYCFHGICIHARDIDGMYCRCSHGYTGIRCQ. Disulfide bonds link cysteine 45-cysteine 58, cysteine 53-cysteine 69, and cysteine 71-cysteine 80. Asparagine 95 carries an N-linked (GlcNAc...) asparagine; by host glycan. The helical transmembrane segment at 101 to 121 threads the bilayer; that stretch reads IPSPGIVLVLLVSIIMCCLLF. Residues 122–140 are Cytoplasmic-facing; that stretch reads VYRFTRRTNKLPLQDMVVP.

It belongs to the orthopoxvirus OPG019 family. Variola growth factor interacts with host EGFR and promotes EGFR dimerization.

Its subcellular location is the host membrane. It localises to the secreted. In terms of biological role, stimulates cellular proliferation (hyperplasia)and mobility around infected cells to promote rapid and efficient spread of infection. This effect is beneficial for virus replication in vivo, because poxviruses replicate possibly better in proliferating cells than in quiescent cells. Acts by binding host EGFR, inducing its dimerization, autophosphorylation and leading to activation of several cellular pathways regulating cell proliferation or cell survival. The activation by host EGFR of mitogen activated protein kinases (MAPK) and extracellular-signal regulated kinases (ERK) are essential for the positive effect of vaccinia growth factor on poxvirus virulence in vivo. The sequence is that of Pro-variola growth factor (OPG019) from Variola virus.